A 334-amino-acid polypeptide reads, in one-letter code: tRNA uridine(34) hydroxylase (334 aa).

The Rhodanese domain occupies 123-217 (SDPDVILVDT…YLEEVKAEES (95 aa)). Residue Cys-177 is the Cysteine persulfide intermediate of the active site.

It belongs to the TrhO family.

The enzyme catalyses uridine(34) in tRNA + AH2 + O2 = 5-hydroxyuridine(34) in tRNA + A + H2O. In terms of biological role, catalyzes oxygen-dependent 5-hydroxyuridine (ho5U) modification at position 34 in tRNAs. The sequence is that of tRNA uridine(34) hydroxylase from Shewanella baltica (strain OS195).